The primary structure comprises 522 residues: Neuropeptide FF receptor 2 (522 aa).

Residues 1-147 lie on the Extracellular side of the membrane; the sequence is MNSFFGTPAA…NYYLHQPQVA (147 aa). The interval 25–49 is disordered; sequence KEAGRERRALSVQQRGGPAWSGSLE. N-linked (GlcNAc...) asparagine glycans are attached at residues N110, N122, and N133. A helical membrane pass occupies residues 148–168; the sequence is AIFIISYFLIFFLCMMGNTVV. Over 169 to 184 the chain is Cytoplasmic; the sequence is CFIVMRNKHMHTVTNL. The chain crosses the membrane as a helical span at residues 185 to 205; it reads FILNLAISDLLVGIFCMPITL. The Extracellular segment spans residues 206-221; the sequence is LDNIIAGWPFGNTMCK. An intrachain disulfide couples C220 to C308. A helical transmembrane segment spans residues 222–242; the sequence is ISGLVQGISVAASVFTLVAIA. At 243 to 262 the chain is on the cytoplasmic side; it reads VDRFQCVVYPFKPKLTIKTA. The helical transmembrane segment at 263-283 threads the bilayer; that stretch reads FVIIMIIWVLAITIMSPSAVM. The Extracellular segment spans residues 284-319; sequence LHVQEEKYYRVRLNSQNKTSPVYWCREDWPNQEMRK. A glycan (N-linked (GlcNAc...) asparagine) is linked at N300. The helical transmembrane segment at 320 to 340 threads the bilayer; that stretch reads IYTTVLFANIYLAPLSLIVIM. The Cytoplasmic segment spans residues 341–377; sequence YGRIGISLFRAAVPHTGRKNQEQWHVVSRKKQKIIKM. Residues 378–398 traverse the membrane as a helical segment; it reads LLIVALLFILSWLPLWTLMML. At 399–413 the chain is on the extracellular side; it reads SDYADLSPNELQIIN. Residues 414-434 traverse the membrane as a helical segment; it reads IYIYPFAHWLAFGNSSVNPII. Over 435-522 the chain is Cytoplasmic; that stretch reads YGFFNENFRR…LKETTNSSEI (88 aa).

Belongs to the G-protein coupled receptor 1 family. As to expression, isoform 1 is abundant in placenta. Relatively highly expressed in thymus, testis, and small intestine. Expressed at low levels in several tissues including spleen, prostate, brain, heart, ovary, colon, kidney, lung, liver and pancreas and not expressed in skeletal muscle and leukocytes. Isoform 2 expression is highest in placenta (but at relatively low level compared to isoform 1). Very low level of expression in numerous tissues including adipose tissue and many brain regions. Isoform 3 is expressed in brain and heart and, at lower levels, in kidney, liver, lung and pancreas.

Its subcellular location is the cell membrane. Its function is as follows. Receptor for NPAF (A-18-F-amide) and NPFF (F-8-F-amide) neuropeptides, also known as morphine-modulating peptides. Can also be activated by a variety of naturally occurring or synthetic FMRF-amide like ligands. This receptor mediates its action by association with G proteins that activate a phosphatidylinositol-calcium second messenger system. The chain is Neuropeptide FF receptor 2 from Homo sapiens (Human).